We begin with the raw amino-acid sequence, 238 residues long: Purine nucleoside phosphorylase DeoD-type (238 aa).

His4 is an a purine D-ribonucleoside binding site. Residues Gly20, Arg24, Arg43, and 87-90 (RVGS) contribute to the phosphate site. A purine D-ribonucleoside-binding positions include 179 to 181 (EME) and 203 to 204 (SD). The active-site Proton donor is the Asp204.

This sequence belongs to the PNP/UDP phosphorylase family. As to quaternary structure, homohexamer; trimer of homodimers.

The enzyme catalyses a purine D-ribonucleoside + phosphate = a purine nucleobase + alpha-D-ribose 1-phosphate. It carries out the reaction a purine 2'-deoxy-D-ribonucleoside + phosphate = a purine nucleobase + 2-deoxy-alpha-D-ribose 1-phosphate. Functionally, catalyzes the reversible phosphorolytic breakdown of the N-glycosidic bond in the beta-(deoxy)ribonucleoside molecules, with the formation of the corresponding free purine bases and pentose-1-phosphate. In Haemophilus influenzae (strain PittEE), this protein is Purine nucleoside phosphorylase DeoD-type.